The chain runs to 1009 residues: Putative receptor-like protein 8 (1009 aa).

The first 22 residues, 1-22 (MKTNFVILLLLLCVFAISPSQQ), serve as a signal peptide directing secretion. The Extracellular portion of the chain corresponds to 23–961 (EEINQHNPGI…EEDDEAPVDM (939 aa)). N-linked (GlcNAc...) asparagine glycans are attached at residues Asn-159 and Asn-197. One copy of the LRR 1; degenerate repeat lies at 204-231 (FEEVRSLELSAGLNGFVDNVEGYKSLRK). LRR repeat units lie at residues 232–255 (LKNL…PFIN), 257–281 (ATSL…EIKD), 282–305 (LTNL…LTHL), 306–329 (KKLK…VVCE), 331–354 (KNLW…LGRL), 355–377 (NKLR…TFNR), 379–402 (ESLE…PLAN), 404–427 (TKLK…SEPK), 442–465 (LEKI…ATIV), 466–490 (HELQ…GYAL), 492–514 (NLLR…MGEM), 515–538 (VNIT…FVTG), 540–565 (FSLK…SFTS), 567–587 (EELR…LLSS), 588–612 (NTTL…MSNL), 613–636 (SGLT…LLAI), 638–660 (FLSL…VGGE), 662–681 (GIKL…DTLL), 682–705 (EKVQ…VNTE), 707–728 (IYIL…LCDL), 729–752 (RNIR…LYNL), 819–842 (LDYM…ELGS), 843–866 (LSKL…SFSN), 867–891 (LKDI…LTNL), and 893–916 (SLVV…QFNT). Asn-267 is a glycosylation site (N-linked (GlcNAc...) asparagine). N-linked (GlcNAc...) asparagine glycosylation is found at Asn-390 and Asn-402. Asn-497, Asn-516, Asn-526, and Asn-551 each carry an N-linked (GlcNAc...) asparagine glycan. 2 N-linked (GlcNAc...) asparagine glycosylation sites follow: Asn-588 and Asn-611. N-linked (GlcNAc...) asparagine glycosylation is found at Asn-716 and Asn-751. N-linked (GlcNAc...) asparagine glycosylation is found at Asn-850, Asn-890, Asn-903, and Asn-934. The tract at residues 934–955 (NRSCDAKKTSDESENGGEEEDD) is disordered. Positions 945 to 955 (ESENGGEEEDD) are enriched in acidic residues. The chain crosses the membrane as a helical span at residues 962–982 (LAFYFSSASTYVTTLIGIFIL). Residues 983–1009 (MCFDCPLRRAWLRIVDASIASVKSMLP) lie on the Cytoplasmic side of the membrane.

Belongs to the RLP family.

The protein resides in the cell membrane. The chain is Putative receptor-like protein 8 from Arabidopsis thaliana (Mouse-ear cress).